Reading from the N-terminus, the 124-residue chain is Testis-expressed protein 54 (124 aa).

Positions 1–10 (MGCCQDKDFE) are enriched in basic and acidic residues. 2 disordered regions span residues 1-77 (MGCC…SNES) and 90-124 (FGRR…PEKG). Residues 11–30 (MSDEQSKEEESEDGREDETT) show a composition bias toward acidic residues. Basic and acidic residues-rich tracts occupy residues 34 to 50 (RGPR…RGEL) and 101 to 124 (RQPD…PEKG).

As to expression, expressed in Testis.

In Homo sapiens (Human), this protein is Testis-expressed protein 54.